Reading from the N-terminus, the 172-residue chain is Large ribosomal subunit protein eL20 (172 aa).

This sequence belongs to the eukaryotic ribosomal protein eL20 family. As to quaternary structure, component of the large ribosomal subunit. Mature ribosomes consist of a small (40S) and a large (60S) subunit. The 40S subunit contains about 32 different proteins and 1 molecule of RNA (18S). The 60S subunit contains 45 different proteins and 3 molecules of RNA (25S, 5.8S and 5S).

It is found in the cytoplasm. Functionally, component of the ribosome, a large ribonucleoprotein complex responsible for the synthesis of proteins in the cell. The small ribosomal subunit (SSU) binds messenger RNAs (mRNAs) and translates the encoded message by selecting cognate aminoacyl-transfer RNA (tRNA) molecules. The large subunit (LSU) contains the ribosomal catalytic site termed the peptidyl transferase center (PTC), which catalyzes the formation of peptide bonds, thereby polymerizing the amino acids delivered by tRNAs into a polypeptide chain. The nascent polypeptides leave the ribosome through a tunnel in the LSU and interact with protein factors that function in enzymatic processing, targeting, and the membrane insertion of nascent chains at the exit of the ribosomal tunnel. This chain is Large ribosomal subunit protein eL20, found in Candida albicans (strain SC5314 / ATCC MYA-2876) (Yeast).